The primary structure comprises 173 residues: Insertion element IS150 protein InsJ (173 aa).

Belongs to the IS150/IS1296 orfA family.

The sequence is that of Insertion element IS150 protein InsJ (insJ) from Escherichia coli (strain K12).